The chain runs to 89 residues: Cell division topological specificity factor (89 aa).

The protein belongs to the MinE family.

In terms of biological role, prevents the cell division inhibition by proteins MinC and MinD at internal division sites while permitting inhibition at polar sites. This ensures cell division at the proper site by restricting the formation of a division septum at the midpoint of the long axis of the cell. The sequence is that of Cell division topological specificity factor from Yersinia pestis bv. Antiqua (strain Angola).